The chain runs to 502 residues: Glycerate kinase (502 aa).

Belongs to the glycerate kinase type-2 family.

The protein localises to the cytoplasm. It carries out the reaction (R)-glycerate + ATP = (2R)-3-phosphoglycerate + ADP + H(+). This is Glycerate kinase (glyctk) from Danio rerio (Zebrafish).